Here is a 208-residue protein sequence, read N- to C-terminus: Protein Nef (208 aa).

The interval Met1–Gly33 is disordered. Gly2 carries N-myristoyl glycine; by host lipidation. Ser6 is modified (phosphoserine; by host). Basic and acidic residues predominate over residues Val15–Pro24. An acidic; interacts with host PACS1 and PACS2; stabilizes the interaction of NEF/MHC-I with host AP1M1; necessary for MHC-I internalization region spans residues Glu64 to Asp67. The interval Pro71–Pro80 is SH3-binding; interaction with Src family tyrosine kinases. The PxxP; stabilizes the interaction of NEF/MHC-I with host AP1M1; necessary for MHC-I internalization motif lies at Pro74–Pro77. Residues Asp110–Trp126 form a mediates dimerization, Nef-PTE1 interaction region. Positions Val150–Val182 are binding to ATP6V1H. The Dileucine internalization motif; necessary for CD4 internalization signature appears at Leu166–Leu167. The Diacidic; necessary for CD4 internalization signature appears at Asp176–Asp177.

Belongs to the lentivirus primate group Nef protein family. As to quaternary structure, monomer; cytosolic form. Homodimer; membrane bound form. Interacts with Nef associated p21-activated kinase (PAK2); this interaction activates PAK2. Associates with the Nef-MHC-I-AP1 complex; this complex is required for MHC-I internalization. Interacts (via C-terminus) with host PI3-kinase. Interacts with host PACS1; this interaction seems to be weak. Interacts with host PACS2. Interacts with host LCK and MAPK3; these interactions inhibit the kinase activity of the latter. Interacts with host ATP6V1H; this interaction may play a role in CD4 endocytosis. Associates with the CD4-Nef-AP2 complex; this complex is required for CD4 internalization. Interacts with host AP2 subunit alpha and AP2 subunit sigma2. Interacts with TCR-zeta chain; this interaction up-regulates the Fas ligand (FasL) surface expression. Interacts with host HCK, LYN, and SRC; these interactions activate the Src family kinases. Interacts with MAP3K5; this interaction inhibits the Fas and TNFR-mediated death signals. Interacts with beta-COP and PTE1. Interacts with human RACK1; this increases Nef phosphorylation by PKC. Interacts with TP53; this interaction decreases the half-life of TP53, protecting the infected cell against p53-mediated apoptosis. The virion-associated Nef proteins are cleaved by the viral protease to release the soluble C-terminal core protein. Nef is probably cleaved concomitantly with viral structural proteins on maturation of virus particles. In terms of processing, myristoylated. Post-translationally, phosphorylated on serine residues, probably by host PKCdelta and theta.

It is found in the host cell membrane. The protein resides in the virion. Its subcellular location is the secreted. The protein localises to the host Golgi apparatus membrane. Functionally, factor of infectivity and pathogenicity, required for optimal virus replication. Alters numerous pathways of T-lymphocyte function and down-regulates immunity surface molecules in order to evade host defense and increase viral infectivity. Alters the functionality of other immunity cells, like dendritic cells, monocytes/macrophages and NK cells. Its function is as follows. In infected CD4(+) T-lymphocytes, down-regulates the surface MHC-I, mature MHC-II, CD4, CD28, CCR5 and CXCR4 molecules. Mediates internalization and degradation of host CD4 through the interaction of with the cytoplasmic tail of CD4, the recruitment of AP-2 (clathrin adapter protein complex 2), internalization through clathrin coated pits, and subsequent transport to endosomes and lysosomes for degradation. Diverts host MHC-I molecules to the trans-Golgi network-associated endosomal compartments by an endocytic pathway to finally target them for degradation. MHC-I down-regulation may involve AP-1 (clathrin adapter protein complex 1) or possibly Src family kinase-ZAP70/Syk-PI3K cascade recruited by PACS2. In consequence infected cells are masked for immune recognition by cytotoxic T-lymphocytes. Decreasing the number of immune receptors also prevents reinfection by more HIV particles (superinfection). Down-regulates host SERINC3 and SERINC5 thereby excluding these proteins from the viral particles. Virion infectivity is drastically higher when SERINC3 or SERINC5 are excluded from the viral envelope, because these host antiviral proteins impair the membrane fusion event necessary for subsequent virion penetration. In terms of biological role, bypasses host T-cell signaling by inducing a transcriptional program nearly identical to that of anti-CD3 cell activation. Interaction with TCR-zeta chain up-regulates the Fas ligand (FasL). Increasing surface FasL molecules and decreasing surface MHC-I molecules on infected CD4(+) cells send attacking cytotoxic CD8+ T-lymphocytes into apoptosis. Plays a role in optimizing the host cell environment for viral replication without causing cell death by apoptosis. Protects the infected cells from apoptosis in order to keep them alive until the next virus generation is ready to strike. Inhibits the Fas and TNFR-mediated death signals by blocking MAP3K5/ASK1. Decreases the half-life of TP53, protecting the infected cell against p53-mediated apoptosis. Inhibits the apoptotic signals regulated by the Bcl-2 family proteins through the formation of a Nef/PI3-kinase/PAK2 complex that leads to activation of PAK2 and induces phosphorylation of host BAD. Functionally, extracellular Nef protein targets CD4(+) T-lymphocytes for apoptosis by interacting with CXCR4 surface receptors. In Human immunodeficiency virus type 1 group M subtype B (isolate SF162) (HIV-1), this protein is Protein Nef.